We begin with the raw amino-acid sequence, 101 residues long: Small ribosomal subunit protein bS6 (101 aa).

This sequence belongs to the bacterial ribosomal protein bS6 family.

Functionally, binds together with bS18 to 16S ribosomal RNA. The chain is Small ribosomal subunit protein bS6 from Pseudarthrobacter chlorophenolicus (strain ATCC 700700 / DSM 12829 / CIP 107037 / JCM 12360 / KCTC 9906 / NCIMB 13794 / A6) (Arthrobacter chlorophenolicus).